We begin with the raw amino-acid sequence, 269 residues long: Putative biopolymer transport protein ExbD (269 aa).

Residues 1 to 40 (MASSPKAPKSHRKFQSIYHPTRPLSLWQDNQHDQGEVRIE) lie on the Cytoplasmic side of the membrane. The helical transmembrane segment at 41 to 61 (IIPLIDVVFCILTFFILGAVG) threads the bilayer. The Periplasmic segment spans residues 62 to 269 (LSRQQAISLD…GNTVPSAPQQ (208 aa)). The disordered stretch occupies residues 190–269 (NGANPGMSNF…GNTVPSAPQQ (80 aa)). The segment covering 193-204 (NPGMSNFNNSNP) has biased composition (low complexity).

Belongs to the ExbD/TolR family.

The protein localises to the cell inner membrane. This Synechocystis sp. (strain ATCC 27184 / PCC 6803 / Kazusa) protein is Putative biopolymer transport protein ExbD.